Here is a 461-residue protein sequence, read N- to C-terminus: Argininosuccinate lyase (461 aa).

This sequence belongs to the lyase 1 family. Argininosuccinate lyase subfamily.

The protein resides in the cytoplasm. It carries out the reaction 2-(N(omega)-L-arginino)succinate = fumarate + L-arginine. It participates in amino-acid biosynthesis; L-arginine biosynthesis; L-arginine from L-ornithine and carbamoyl phosphate: step 3/3. This is Argininosuccinate lyase from Nitrosomonas europaea (strain ATCC 19718 / CIP 103999 / KCTC 2705 / NBRC 14298).